A 177-amino-acid chain; its full sequence is Thymidine kinase (177 aa).

Position 11–18 (11–18) interacts with ATP; the sequence is GPMFSGKS. Glutamate 83 (proton acceptor) is an active-site residue. Residue phenylalanine 113 coordinates substrate. Cysteine 138 and cysteine 141 together coordinate Zn(2+). 157–161 contributes to the substrate binding site; the sequence is IEIIG. Zn(2+) is bound by residues cysteine 170 and cysteine 173.

This sequence belongs to the thymidine kinase family. As to quaternary structure, homotetramer. Two molecules of substrate bind to each enzyme tetramer.

The enzyme catalyses thymidine + ATP = dTMP + ADP + H(+). Functionally, phosphorylates thymidine and thymidine analogs, such as azidothymidine (AZT). Part of the salvage pathway for pyrimidine deoxyribonucleotide synthesis. This Procyon lotor (Raccoon) protein is Thymidine kinase (OPG101).